The sequence spans 149 residues: Large ribosomal subunit protein uL13 (149 aa).

Belongs to the universal ribosomal protein uL13 family. In terms of assembly, part of the 50S ribosomal subunit.

Its function is as follows. This protein is one of the early assembly proteins of the 50S ribosomal subunit, although it is not seen to bind rRNA by itself. It is important during the early stages of 50S assembly. The chain is Large ribosomal subunit protein uL13 from Borrelia hermsii (strain HS1 / DAH).